Consider the following 293-residue polypeptide: Bifunctional protein FolD (293 aa).

NADP(+) is bound by residues Gly166 to Ser168 and Ile232.

This sequence belongs to the tetrahydrofolate dehydrogenase/cyclohydrolase family. As to quaternary structure, homodimer.

The enzyme catalyses (6R)-5,10-methylene-5,6,7,8-tetrahydrofolate + NADP(+) = (6R)-5,10-methenyltetrahydrofolate + NADPH. The catalysed reaction is (6R)-5,10-methenyltetrahydrofolate + H2O = (6R)-10-formyltetrahydrofolate + H(+). It participates in one-carbon metabolism; tetrahydrofolate interconversion. Catalyzes the oxidation of 5,10-methylenetetrahydrofolate to 5,10-methenyltetrahydrofolate and then the hydrolysis of 5,10-methenyltetrahydrofolate to 10-formyltetrahydrofolate. The polypeptide is Bifunctional protein FolD (Yersinia enterocolitica serotype O:8 / biotype 1B (strain NCTC 13174 / 8081)).